The sequence spans 196 residues: Corrinoid adenosyltransferase (196 aa).

An ATP-binding site is contributed by 36-42; that stretch reads GNGKGKT.

It belongs to the Cob(I)alamin adenosyltransferase family.

The protein localises to the cytoplasm. The enzyme catalyses 2 cob(II)yrinate a,c diamide + reduced [electron-transfer flavoprotein] + 2 ATP = 2 adenosylcob(III)yrinate a,c-diamide + 2 triphosphate + oxidized [electron-transfer flavoprotein] + 3 H(+). The catalysed reaction is 2 cob(II)alamin + reduced [electron-transfer flavoprotein] + 2 ATP = 2 adenosylcob(III)alamin + 2 triphosphate + oxidized [electron-transfer flavoprotein] + 3 H(+). It functions in the pathway cofactor biosynthesis; adenosylcobalamin biosynthesis; adenosylcobalamin from cob(II)yrinate a,c-diamide: step 2/7. Its function is as follows. Required for both de novo synthesis of the corrin ring for the assimilation of exogenous corrinoids. Participates in the adenosylation of a variety of incomplete and complete corrinoids. The chain is Corrinoid adenosyltransferase (btuR) from Escherichia coli O6:H1 (strain CFT073 / ATCC 700928 / UPEC).